The sequence spans 390 residues: Cystathionine beta-lyase MetC (390 aa).

Lys-200 is subject to N6-(pyridoxal phosphate)lysine.

Belongs to the trans-sulfuration enzymes family. As to quaternary structure, homotetramer. Pyridoxal 5'-phosphate serves as cofactor.

The protein resides in the cytoplasm. The catalysed reaction is L,L-cystathionine + H2O = L-homocysteine + pyruvate + NH4(+). The enzyme catalyses an S-substituted L-cysteine + H2O = a thiol + pyruvate + NH4(+). The protein operates within amino-acid biosynthesis; L-methionine biosynthesis via de novo pathway; L-homocysteine from L-cystathionine: step 1/1. Its function is as follows. Catalyzes the transformation of cystathionine into homocysteine. Also exhibits cysteine desulfhydrase activity in vitro, producing sulfide from cysteine. In Bacillus subtilis (strain 168), this protein is Cystathionine beta-lyase MetC (metC).